Consider the following 272-residue polypeptide: HTH-type transcriptional repressor AllR (272 aa).

A disordered region spans residues M1–G20. One can recognise an HTH iclR-type domain in the interval A21–L83. Residues V43 to K62 constitute a DNA-binding region (H-T-H motif). Residues V98 to L267 enclose the IclR-ED domain. Glyoxylate is bound by residues S154–A156, D207, C217, and S234–S236.

Functionally, negative regulator of allantoin and glyoxylate utilization operons. Binds to the gcl promoter and to the allS-allA intergenic region. The sequence is that of HTH-type transcriptional repressor AllR (allR) from Salmonella typhi.